We begin with the raw amino-acid sequence, 158 residues long: Immunoglobulin J chain (158 aa).

Positions 1 to 22 are cleaved as a signal peptide; sequence MKNHLFFWGVLAIFVQAVLVTA. 3 cysteine pairs are disulfide-bonded: cysteine 36-cysteine 122, cysteine 95-cysteine 115, and cysteine 130-cysteine 155. An N-linked (GlcNAc...) (complex) asparagine glycan is attached at asparagine 72.

Part of the secretory IgA (sIgA) complex that consists of two, four or five IgA monomers, and two additional non-Ig polypeptides, namely the JCHAIN and the secretory component (the proteolytic product of PIGR). Part of the secretory IgM (sIgM) complex that consist of five IgM monomers, and two additional non-Ig polypeptides, namely the JCHAIN and the secretory component (the proteolytic product of PIGR). JCHAIN-containing IgM interacts (via CH4 domain) with FCRM (via Ig-like domain). In terms of processing, N-glycosylated. N-glycans attached to Asn-72 varies from truncated, differentially fucosylated to sialylated (NeuGc) complex types: Man3GlcNAc2; GlcNAc2Man3GlcNAc2(Fuc); Gal1GlcNAc1Man3GlcNAc2; GlcNAc2Man3GlcNAc2; GlcNAc1Man3GlcNAc2; GlcNAc1Man2GlcNAc2 and NeuGc1Gal1GlcNAc2Man3GlcNAc2.

Its subcellular location is the secreted. Its function is as follows. Serves to link two monomer units of either IgM or IgA. In the case of IgM, the J chain-joined dimer is a nucleating unit for the IgM pentamer, and in the case of IgA it induces dimers and/or larger polymers. It also helps to bind these immunoglobulins to secretory component. In Equus asinus (Donkey), this protein is Immunoglobulin J chain (JCHAIN).